We begin with the raw amino-acid sequence, 585 residues long: 1-deoxy-D-xylulose-5-phosphate synthase (585 aa).

Thiamine diphosphate is bound by residues histidine 80 and 121–123 (GHS). Aspartate 152 lines the Mg(2+) pocket. Thiamine diphosphate-binding positions include 153-154 (GS), asparagine 181, tyrosine 259, and glutamate 334. A Mg(2+)-binding site is contributed by asparagine 181.

Belongs to the transketolase family. DXPS subfamily. Homodimer. Mg(2+) is required as a cofactor. The cofactor is thiamine diphosphate.

It catalyses the reaction D-glyceraldehyde 3-phosphate + pyruvate + H(+) = 1-deoxy-D-xylulose 5-phosphate + CO2. It functions in the pathway metabolic intermediate biosynthesis; 1-deoxy-D-xylulose 5-phosphate biosynthesis; 1-deoxy-D-xylulose 5-phosphate from D-glyceraldehyde 3-phosphate and pyruvate: step 1/1. In terms of biological role, catalyzes the acyloin condensation reaction between C atoms 2 and 3 of pyruvate and glyceraldehyde 3-phosphate to yield 1-deoxy-D-xylulose-5-phosphate (DXP). The chain is 1-deoxy-D-xylulose-5-phosphate synthase from Buchnera aphidicola subsp. Schizaphis graminum (strain Sg).